The sequence spans 168 residues: Crossover junction endodeoxyribonuclease RuvC (168 aa).

Catalysis depends on residues Asp-9, Glu-69, and Asp-141. Asp-9, Glu-69, and Asp-141 together coordinate Mg(2+).

Belongs to the RuvC family. In terms of assembly, homodimer which binds Holliday junction (HJ) DNA. The HJ becomes 2-fold symmetrical on binding to RuvC with unstacked arms; it has a different conformation from HJ DNA in complex with RuvA. In the full resolvosome a probable DNA-RuvA(4)-RuvB(12)-RuvC(2) complex forms which resolves the HJ. The cofactor is Mg(2+).

The protein localises to the cytoplasm. The enzyme catalyses Endonucleolytic cleavage at a junction such as a reciprocal single-stranded crossover between two homologous DNA duplexes (Holliday junction).. Its function is as follows. The RuvA-RuvB-RuvC complex processes Holliday junction (HJ) DNA during genetic recombination and DNA repair. Endonuclease that resolves HJ intermediates. Cleaves cruciform DNA by making single-stranded nicks across the HJ at symmetrical positions within the homologous arms, yielding a 5'-phosphate and a 3'-hydroxyl group; requires a central core of homology in the junction. The consensus cleavage sequence is 5'-(A/T)TT(C/G)-3'. Cleavage occurs on the 3'-side of the TT dinucleotide at the point of strand exchange. HJ branch migration catalyzed by RuvA-RuvB allows RuvC to scan DNA until it finds its consensus sequence, where it cleaves and resolves the cruciform DNA. This is Crossover junction endodeoxyribonuclease RuvC from Bdellovibrio bacteriovorus (strain ATCC 15356 / DSM 50701 / NCIMB 9529 / HD100).